A 125-amino-acid chain; its full sequence is Small ribosomal subunit protein bS6m (125 aa).

Belongs to the bacterial ribosomal protein bS6 family. As to quaternary structure, component of the mitochondrial ribosome small subunit (28S) which comprises a 12S rRNA and about 30 distinct proteins.

The protein resides in the mitochondrion. In Mus musculus (Mouse), this protein is Small ribosomal subunit protein bS6m (Mrps6).